Consider the following 444-residue polypeptide: MSSRKEWALIVSLLLGAILVPINSTMIAVALSSISHTYNESIASITWVVTVYLIVMAVTQPIAGKLGDMYGNKTMYLWGVGLFLIASLGCALSPSLLLLIVFRALQAVGGALLTPNSIAIIRHVVSEKRLPKVFGFFGLGAGLGAALGPFIGSILIDSFSWHSIFWVNIPFLAIALFTALTMFPQYKENKSDAPLDIIGSLLLAGSIVSIILLTKNEAPWGYTVYSVLILLFVPLFFRREKRTQHPIIDFALFKSSTFTNANLSVLLSNLMMYAVLLIMPLFMTNQFGLNTSNSGMALSVFSIFMSASNWVGAQLHHKWGAKKIIFLSFAMMAGANLLFLLLSSSHSVLFLMLSLILGGLASGVGLTSMQVSSLATVDPGMSGVASGIFSTFRYFGSIISSALIGLISGYHTLFMILFAVSIIGVFVSLGIKSDETARIEKNSA.

A run of 14 helical transmembrane segments spans residues 9 to 29 (LIVS…MIAV), 42 to 62 (IASI…TQPI), 82 to 102 (LFLI…LIVF), 104 to 126 (ALQA…HVVS), 136 to 156 (FFGL…SILI), 164 to 184 (IFWV…TMFP), 193 to 213 (APLD…IILL), 217 to 237 (EAPW…PLFF), 263 to 283 (LSVL…PLFM), 295 to 315 (GMAL…GAQL), 324 to 344 (IIFL…LLSS), 347 to 367 (SVLF…VGLT), 387 to 407 (GIFS…IGLI), and 411 to 431 (HTLF…SLGI).

The protein belongs to the major facilitator superfamily. TCR/Tet family.

The protein localises to the cell membrane. This is an uncharacterized protein from Bacillus subtilis (strain 168).